We begin with the raw amino-acid sequence, 642 residues long: 1-deoxy-D-xylulose-5-phosphate synthase 2 (642 aa).

Residues histidine 79 and 120 to 122 (AHS) each bind thiamine diphosphate. Aspartate 155 contacts Mg(2+). Thiamine diphosphate contacts are provided by residues 156–157 (GS), asparagine 184, tyrosine 293, and glutamate 375. Asparagine 184 lines the Mg(2+) pocket.

It belongs to the transketolase family. DXPS subfamily. Homodimer. Requires Mg(2+) as cofactor. The cofactor is thiamine diphosphate.

The catalysed reaction is D-glyceraldehyde 3-phosphate + pyruvate + H(+) = 1-deoxy-D-xylulose 5-phosphate + CO2. It functions in the pathway metabolic intermediate biosynthesis; 1-deoxy-D-xylulose 5-phosphate biosynthesis; 1-deoxy-D-xylulose 5-phosphate from D-glyceraldehyde 3-phosphate and pyruvate: step 1/1. Functionally, catalyzes the acyloin condensation reaction between C atoms 2 and 3 of pyruvate and glyceraldehyde 3-phosphate to yield 1-deoxy-D-xylulose-5-phosphate (DXP). The protein is 1-deoxy-D-xylulose-5-phosphate synthase 2 of Roseobacter denitrificans (strain ATCC 33942 / OCh 114) (Erythrobacter sp. (strain OCh 114)).